Here is a 156-residue protein sequence, read N- to C-terminus: Small ribosomal subunit protein uS7 (156 aa).

Part of the 30S ribosomal subunit. Contacts proteins S9 and S11.

One of the primary rRNA binding proteins, it binds directly to 16S rRNA where it nucleates assembly of the head domain of the 30S subunit. Is located at the subunit interface close to the decoding center, probably blocks exit of the E-site tRNA. The chain is Small ribosomal subunit protein uS7 from Rhodopseudomonas palustris (strain ATCC BAA-98 / CGA009).